The following is a 779-amino-acid chain: Anion/proton exchange transporter GEF1 (779 aa).

The Cytoplasmic portion of the chain corresponds to 1-75 (MPTTYVPINQ…REVIWDRAKT (75 aa)). Residues 76–96 (FITLSSTAIVIGCIAGFLQVF) form a helical membrane-spanning segment. Over 97 to 154 (TETLVNWKTGHCQRNWLLNKSFCCNGVVNEVTSTSNLLLKRQEFECEAQGLWIAWKGH) the chain is Lumenal. Residues 155–175 (VSPFIIFMLLSVLFALISTLL) form a helical membrane-spanning segment. Residues 176–177 (VK) are Cytoplasmic-facing. A helical membrane pass occupies residues 178 to 198 (YVAPMATGSGISEIKVWVSGF). Topologically, residues 199-203 (EYNKE) are lumenal. The chain crosses the membrane as a helical span at residues 204-224 (FLGFLTLVIKSVALPLAISSG). Topologically, residues 225-264 (LSVGKEGPSVHYATCCGYLLTKWLLRDTLTYSSQYEYITA) are cytoplasmic. Residues 265-285 (ASGAGVAVAFGAPIGGVLFGL) traverse the membrane as a helical segment. Over 286–296 (EEIASANRFNS) the chain is Lumenal. Residues 297–319 (STLWKSYYVALVAITTLKYIDPF) traverse the membrane as a helical segment. Topologically, residues 320–336 (RNGRVILFNVTYDRDWK) are cytoplasmic. Residues 337–357 (VQEIPIFIALGIFGGLYGKYI) traverse the membrane as a helical segment. The Lumenal segment spans residues 358-369 (SKWNINFIHFRK). A helical membrane pass occupies residues 370–390 (MYLSSWPVQEVLFLATLTALI). Residues 391-436 (SYFNEFLKLDMTESMGILFHECVKNDNTSTFSHRLCQLDENTHAFE) are Cytoplasmic-facing. A helical transmembrane segment spans residues 437 to 457 (FLKIFTSLCFATVIRALLVVV). Over 458-465 (SYGARVPA) the chain is Lumenal. The chain crosses the membrane as a helical span at residues 466 to 486 (GIFVPSMAVGATFGRAVSLLV). Over 487 to 500 (ERFISGPSVITPGA) the chain is Cytoplasmic. A helical membrane pass occupies residues 501–523 (YAFLGAAATLSGITNLTLTVVVI). The Lumenal portion of the chain corresponds to 524 to 529 (MFELTG). A helical membrane pass occupies residues 530–552 (AFMYIIPLMIVVAITRIILSTSG). The Cytoplasmic portion of the chain corresponds to 553–779 (ISGGIADQMI…FTTNRNGNVI (227 aa)). CBS domains follow at residues 591 to 659 (MSSK…VNST) and 688 to 744 (MNES…YREV).

It belongs to the chloride channel (TC 2.A.49) family. In terms of assembly, homodimer. Interacts with GET3. In terms of processing, proteolytically processed in the secretory pathway by protease KEX2 within the first extracellular loop. However, both the N- and C-terminal products of the cleavage reaction are required for assembly of a functional channel.

It is found in the golgi apparatus membrane. It localises to the endosome membrane. Its subcellular location is the prevacuolar compartment membrane. Its function is as follows. Anion/proton exchange transporter involved in iron and copper cation homeostasis. Involved in intracellular iron metabolism during growth on fermentable and non fermentable carbon sources. Required for proper copper-loading and maturation of multicopper oxidase FET3. Important for adjusting intracellular compartment pH to more alkaline pH under iron limitation. May also transport chloride ions through the plasma membrane. This is Anion/proton exchange transporter GEF1 (GEF1) from Saccharomyces cerevisiae (strain ATCC 204508 / S288c) (Baker's yeast).